The chain runs to 206 residues: Small ribosomal subunit protein uS4 (206 aa).

In terms of domain architecture, S4 RNA-binding spans 96–156; the sequence is GRLDNVVYRM…EKSKKQARIK (61 aa).

It belongs to the universal ribosomal protein uS4 family. In terms of assembly, part of the 30S ribosomal subunit. Contacts protein S5. The interaction surface between S4 and S5 is involved in control of translational fidelity.

One of the primary rRNA binding proteins, it binds directly to 16S rRNA where it nucleates assembly of the body of the 30S subunit. In terms of biological role, with S5 and S12 plays an important role in translational accuracy. The protein is Small ribosomal subunit protein uS4 of Glaesserella parasuis serovar 5 (strain SH0165) (Haemophilus parasuis).